The sequence spans 177 residues: uncharacterized protein (177 aa).

A disordered region spans residues 122–177 (LPFTRNGSGQQSNKLRDPKKGRTHKPKPSEKHKKNKTGKKGAQEKTHRSRSSRKGN). Basic residues-rich tracts occupy residues 142-160 (GRTH…KTGK) and 168-177 (HRSRSSRKGN).

This is an uncharacterized protein from Saccharomyces cerevisiae (strain ATCC 204508 / S288c) (Baker's yeast).